Here is an 867-residue protein sequence, read N- to C-terminus: DNA mismatch repair protein MutS (867 aa).

An ATP-binding site is contributed by 609-616 (GPNMSGKS).

This sequence belongs to the DNA mismatch repair MutS family.

Functionally, this protein is involved in the repair of mismatches in DNA. It is possible that it carries out the mismatch recognition step. This protein has a weak ATPase activity. This Latilactobacillus sakei subsp. sakei (strain 23K) (Lactobacillus sakei subsp. sakei) protein is DNA mismatch repair protein MutS.